The chain runs to 261 residues: Zinc finger protein 664 (261 aa).

C2H2-type zinc fingers lie at residues 3–25 (YKCPMCREFFSERADLFMHQKIH), 31–53 (HKCDKCDKGFFHISELHIHWRDH), 59–81 (YKCDDCVKDFSTTTKLNRHKKIH), 87–109 (YKCYECGKAFNWSSHLQIHMRVH), 115–137 (YVCSECGRGFSNSSNLCMHQRVH), 143–165 (FKCEECGKAFRHTSSLCMHQRVH), 171–193 (YKCYECGKAFSQSSSLCIHQRVH), 199–221 (YRCCGCGKAFSQSSSLCIHQRVH), and 227–249 (FKCDECGKAFSQSTSLCIHQRVH). K257 participates in a covalent cross-link: Glycyl lysine isopeptide (Lys-Gly) (interchain with G-Cter in SUMO2).

Belongs to the krueppel C2H2-type zinc-finger protein family.

The protein resides in the nucleus. In terms of biological role, may be involved in transcriptional regulation. The polypeptide is Zinc finger protein 664 (Znf664) (Mus musculus (Mouse)).